A 253-amino-acid polypeptide reads, in one-letter code: Aminoglycoside nucleotidyltransferase (4') (253 aa).

In terms of assembly, homodimer.

It catalyses the reaction kanamycin A + ATP = 4'-adenylylkanamycin A + diphosphate. The enzyme catalyses amikacin + ATP = 4'-adenylylamikacin + diphosphate. It carries out the reaction neomycin B + ATP = 4'-adenylylneomycin B + diphosphate. The catalysed reaction is paromomycin + ATP = 4'-adenylylparomomycin + diphosphate. It catalyses the reaction ribostamycin + ATP = 4'-adenylylribostamycin + diphosphate. The enzyme catalyses tobramycin + ATP = 4'-adenylyltobramycin + diphosphate. It carries out the reaction kanamycin A + CTP = 4'-cytidylylkanamycin A + diphosphate. The catalysed reaction is kanamycin A + GTP = 4'-guanylylkanamycin A + diphosphate. It catalyses the reaction kanamycin A + ITP = 4'-inosinylylkanamycin A + diphosphate. The enzyme catalyses dTTP + kanamycin A = 4'-thymidylylkanamycin A + diphosphate. It carries out the reaction kanamycin A + UTP = 4'-uridylylkanamycin A + diphosphate. The catalysed reaction is kanamycin A + dATP = 4'-(2'-deoxyadenylyl)kanamycin A + diphosphate. It catalyses the reaction kanamycin A + dCTP = 4'-(2'-deoxycytidylyl)kanamycin A + diphosphate. The enzyme catalyses kanamycin A + dGTP = 4'-(2'-deoxyguanylyl)kanamycin A + diphosphate. It carries out the reaction dUTP + kanamycin A = 4'-(2'-deoxyuridylyl)kanamycin A + diphosphate. The catalysed reaction is amikacin + GTP = 4'-guanylylamikacin + diphosphate. It catalyses the reaction amikacin + ITP = 4'-inosinylylamikacin + diphosphate. The enzyme catalyses amikacin + CTP = 4'-cytidylylamikacin + diphosphate. It carries out the reaction amikacin + UTP = 4'-uridylylamikacin + diphosphate. The catalysed reaction is amikacin + dTTP = 4'-thymidylylamikacin + diphosphate. Its function is as follows. Inactivates aminoglycoside antibiotics such as kanamycin by catalyzing the transfer of a nucleotidyl group from nucleoside triphosphates such as (d)ATP to the 4'-hydroxyl group of the aminoglycoside. This Bacillus sp protein is Aminoglycoside nucleotidyltransferase (4').